The chain runs to 84 residues: Small ribosomal subunit protein bS16 (84 aa).

Belongs to the bacterial ribosomal protein bS16 family.

The chain is Small ribosomal subunit protein bS16 from Delftia acidovorans (strain DSM 14801 / SPH-1).